The sequence spans 214 residues: Probable chemoreceptor glutamine deamidase CheD (214 aa).

It belongs to the CheD family.

It carries out the reaction L-glutaminyl-[protein] + H2O = L-glutamyl-[protein] + NH4(+). Its function is as follows. Probably deamidates glutamine residues to glutamate on methyl-accepting chemotaxis receptors (MCPs), playing an important role in chemotaxis. This chain is Probable chemoreceptor glutamine deamidase CheD, found in Vibrio vulnificus (strain CMCP6).